Here is a 461-residue protein sequence, read N- to C-terminus: Complement C1r subcomponent-like protein (461 aa).

Positions 1–22 (MCWLLLWGILHTCPTQASVLLA) are cleaved as a signal peptide. Residues 23–139 (QQFPQQLTSP…KGFLALYQAA (117 aa)) enclose the CUB domain. Cystine bridges form between Cys-71–Cys-89 and Cys-164–Cys-197. Positions 138-199 (AAVSQPNGDA…RGEEVPECVP (62 aa)) constitute a Sushi domain. A Peptidase S1 domain is found at 214 to 453 (TFGSSRAKPG…YVDWIKGVIE (240 aa)). Catalysis depends on His-252, which acts as the Charge relay system. A glycan (N-linked (GlcNAc...) asparagine) is linked at Asn-265. The active-site Charge relay system is Asp-308. N-linked (GlcNAc...) asparagine glycosylation occurs at Asn-332. Disulfide bonds link Cys-371–Cys-390 and Cys-401–Cys-431. Ser-405 acts as the Charge relay system in catalysis.

The protein belongs to the peptidase S1 family.

The protein localises to the secreted. In terms of biological role, mediates the proteolytic cleavage of HP/haptoglobin in the endoplasmic reticulum. In Rattus norvegicus (Rat), this protein is Complement C1r subcomponent-like protein (C1rl).